Reading from the N-terminus, the 138-residue chain is Acidic phospholipase A2 (138 aa).

A signal peptide spans 1–16; it reads MRTLWIVAVLLLGVEG. 7 disulfides stabilise this stretch: cysteine 42–cysteine 131, cysteine 44–cysteine 60, cysteine 59–cysteine 111, cysteine 65–cysteine 138, cysteine 66–cysteine 104, cysteine 73–cysteine 97, and cysteine 91–cysteine 102. Tyrosine 43, glycine 45, and glycine 47 together coordinate Ca(2+). Residue histidine 63 is part of the active site. Position 64 (aspartate 64) interacts with Ca(2+). Residue aspartate 105 is part of the active site.

Belongs to the phospholipase A2 family. Group II subfamily. D49 sub-subfamily. Homodimer. Ca(2+) serves as cofactor. As to expression, expressed by the venom gland.

The protein localises to the secreted. It catalyses the reaction a 1,2-diacyl-sn-glycero-3-phosphocholine + H2O = a 1-acyl-sn-glycero-3-phosphocholine + a fatty acid + H(+). PLA2 catalyzes the calcium-dependent hydrolysis of the 2-acyl groups in 3-sn-phosphoglycerides. The protein is Acidic phospholipase A2 of Crotalus atrox (Western diamondback rattlesnake).